The following is a 373-amino-acid chain: Probable neutral protease 2 homolog MCYG_05201 (373 aa).

The first 19 residues, 1–19, serve as a signal peptide directing secretion; it reads MQFFTALAAVGALVAPALA. A propeptide spanning residues 20–187 is cleaved from the precursor; it reads LPTQVPANQS…AHIVGTIDKR (168 aa). Disulfide bonds link C195–C265 and C272–C290. H314 lines the Zn(2+) pocket. Residue E315 is part of the active site. Zn(2+) contacts are provided by H318 and D329.

Belongs to the peptidase M35 family. Requires Zn(2+) as cofactor.

Its subcellular location is the secreted. It catalyses the reaction Preferential cleavage of bonds with hydrophobic residues in P1'. Also 3-Asn-|-Gln-4 and 8-Gly-|-Ser-9 bonds in insulin B chain.. Its function is as follows. Probable secreted metalloprotease that shows high activities on basic nuclear substrates such as histone and protamine. May be involved in virulence. The chain is Probable neutral protease 2 homolog MCYG_05201 from Arthroderma otae (strain ATCC MYA-4605 / CBS 113480) (Microsporum canis).